Here is a 583-residue protein sequence, read N- to C-terminus: 2-succinyl-5-enolpyruvyl-6-hydroxy-3-cyclohexene-1-carboxylate synthase (583 aa).

This sequence belongs to the TPP enzyme family. MenD subfamily. As to quaternary structure, homodimer. Mg(2+) serves as cofactor. The cofactor is Mn(2+). Thiamine diphosphate is required as a cofactor.

It catalyses the reaction isochorismate + 2-oxoglutarate + H(+) = 5-enolpyruvoyl-6-hydroxy-2-succinyl-cyclohex-3-ene-1-carboxylate + CO2. It participates in quinol/quinone metabolism; 1,4-dihydroxy-2-naphthoate biosynthesis; 1,4-dihydroxy-2-naphthoate from chorismate: step 2/7. Its pathway is cofactor biosynthesis; phylloquinone biosynthesis. In terms of biological role, catalyzes the thiamine diphosphate-dependent decarboxylation of 2-oxoglutarate and the subsequent addition of the resulting succinic semialdehyde-thiamine pyrophosphate anion to isochorismate to yield 2-succinyl-5-enolpyruvyl-6-hydroxy-3-cyclohexene-1-carboxylate (SEPHCHC). The protein is 2-succinyl-5-enolpyruvyl-6-hydroxy-3-cyclohexene-1-carboxylate synthase of Nostoc sp. (strain PCC 7120 / SAG 25.82 / UTEX 2576).